Here is a 100-residue protein sequence, read N- to C-terminus: Integration host factor subunit alpha (100 aa).

The protein belongs to the bacterial histone-like protein family. Heterodimer of an alpha and a beta chain.

In terms of biological role, this protein is one of the two subunits of integration host factor, a specific DNA-binding protein that functions in genetic recombination as well as in transcriptional and translational control. This chain is Integration host factor subunit alpha, found in Methylobacillus flagellatus (strain ATCC 51484 / DSM 6875 / VKM B-1610 / KT).